The following is a 570-amino-acid chain: Urease subunit alpha 1 (570 aa).

Residues 131–570 (GGIDTHVHFI…VPMAQRYFLF (440 aa)) enclose the Urease domain. Ni(2+)-binding residues include histidine 136, histidine 138, and lysine 219. Residue lysine 219 is modified to N6-carboxylysine. Residue histidine 221 participates in substrate binding. Histidine 248 and histidine 274 together coordinate Ni(2+). Histidine 322 (proton donor) is an active-site residue. Aspartate 362 contributes to the Ni(2+) binding site.

It belongs to the metallo-dependent hydrolases superfamily. Urease alpha subunit family. Heterotrimer of UreA (gamma), UreB (beta) and UreC (alpha) subunits. Three heterotrimers associate to form the active enzyme. Ni cation serves as cofactor. In terms of processing, carboxylation allows a single lysine to coordinate two nickel ions.

It is found in the cytoplasm. The enzyme catalyses urea + 2 H2O + H(+) = hydrogencarbonate + 2 NH4(+). It functions in the pathway nitrogen metabolism; urea degradation; CO(2) and NH(3) from urea (urease route): step 1/1. In terms of biological role, disrupting the ure1 operon causes loss of urease activity, decreased resistance to low pH killing in vitro and decreased pathogen survival when inoculated in BALB/c mice by gavage. This Brucella suis biovar 1 (strain 1330) protein is Urease subunit alpha 1.